The following is a 264-amino-acid chain: Cell division protein DivIB (264 aa).

Topologically, residues M1–K23 are cytoplasmic. The chain crosses the membrane as a helical span at residues L24 to P44. The Extracellular segment spans residues Y45–Q264. The 69-residue stretch at S46–Q114 folds into the POTRA domain.

It belongs to the FtsQ/DivIB family. DivIB subfamily.

It localises to the cell membrane. In terms of biological role, cell division protein that may be involved in stabilizing or promoting the assembly of the division complex. This Brevibacillus brevis (strain 47 / JCM 6285 / NBRC 100599) protein is Cell division protein DivIB.